Consider the following 422-residue polypeptide: Cytochrome P450-pinF1, plant-inducible (422 aa).

Residue cysteine 369 participates in heme binding.

The protein belongs to the cytochrome P450 family. It depends on heme as a cofactor.

Its function is as follows. Not essential for virulence, but may be involved in the detoxification of plant protective agents at the site of wounding. The sequence is that of Cytochrome P450-pinF1, plant-inducible (cyp103) from Rhizobium radiobacter (Agrobacterium tumefaciens).